The primary structure comprises 3414 residues: Genome polyprotein (3414 aa).

The disordered stretch occupies residues 1–30; the sequence is MVKKAILKGKGGGPPRRVSKETATKTRQPR. Residues 1 to 98 are Cytoplasmic-facing; it reads MVKKAILKGK…LQKRGKRRSA (98 aa). Positions 97–117 are cleaved as a propeptide — ER anchor for the capsid protein C, removed in mature form by serine protease NS3; it reads SATDWMSWLLVITLLGMTIAA. Residues 99 to 119 form a helical membrane-spanning segment; it reads TDWMSWLLVITLLGMTIAATV. At 120 to 242 the chain is on the extracellular side; it reads RKERDGSTVI…HLTRVEGWVW (123 aa). Asn-144 is a glycosylation site (N-linked (GlcNAc...) asparagine; by host). Residues 243-260 traverse the membrane as a helical segment; that stretch reads KNRLLALAMVTVVWLTLE. Residue Ser-261 is a topological domain, cytoplasmic. The chain crosses the membrane as a helical span at residues 262 to 280; it reads VVTRVAVLVVLLCLAPVYA. At 281–727 the chain is on the extracellular side; sequence SRCTHLENRD…HTVLGGAFNS (447 aa). Cystine bridges form between Cys-283–Cys-310, Cys-340–Cys-396, Cys-340–Cys-401, Cys-354–Cys-385, Cys-372–Cys-396, and Cys-372–Cys-401. Positions 378–391 are fusion peptide; sequence DRGWGNHCGLFGKG. The N-linked (GlcNAc...) asparagine; by host glycan is linked to Asn-434. 2 disulfides stabilise this stretch: Cys-466/Cys-570 and Cys-587/Cys-618. A helical membrane pass occupies residues 728–748; the sequence is IFGGVGFLPKLLLGVALAWLG. The Extracellular segment spans residues 749 to 755; sequence LNMRNPT. A helical membrane pass occupies residues 756-776; sequence MSMSFLLAGVLVLAMTLGVGA. Residues 777–1132 lie on the Extracellular side of the membrane; that stretch reads DVGCAVDTER…RSMVVADNGE (356 aa). 6 disulfide bridges follow: Cys-780/Cys-791, Cys-831/Cys-920, Cys-955/Cys-1000, Cys-1057/Cys-1106, Cys-1068/Cys-1090, and Cys-1089/Cys-1093. Residues Asn-861, Asn-983, and Asn-999 are each glycosylated (N-linked (GlcNAc...) asparagine; by host). A helical transmembrane segment spans residues 1133 to 1153; the sequence is LLSEGGVPGIVALFVVLEYII. The Cytoplasmic segment spans residues 1154–1158; sequence RRRPS. The helical transmembrane segment at 1159–1179 threads the bilayer; that stretch reads TGSTVVWGGIVVLALLVTGMV. The Lumenal portion of the chain corresponds to 1180–1187; sequence RMESLVRY. The helical transmembrane segment at 1188–1208 threads the bilayer; it reads VVAVGITFHLELGPEIVALML. Residues 1209-1293 lie on the Cytoplasmic side of the membrane; the sequence is LQAVFELRVG…LLMALMTQQD (85 aa). The helical transmembrane segment at 1294–1314 threads the bilayer; that stretch reads VVTVHHGLVCFLSAASACSIW. The Lumenal portion of the chain corresponds to 1315–1327; that stretch reads RLLRGHREQKGLT. A helical transmembrane segment spans residues 1328–1348; sequence WIVPLARLLGGEGSGIRLLAF. At 1349–1359 the chain is on the cytoplasmic side; it reads WELSAHRGRRS. A helical transmembrane segment spans residues 1360-1377; the sequence is FSEPLTVVGVMLTLASGM. The Lumenal segment spans residues 1378–1382; it reads MRHTS. Residues 1383 to 1403 form a helical membrane-spanning segment; it reads QEALCALAVASFLLLMLVLGT. Residues 1404-1454 are Cytoplasmic-facing; it reads RKMQLVAEWSGCVEWHPELVNEGGEVSLRVRQDAMGNFHLTELEKEERMMA. Residues 1410-1449 form an interacts with and activates NS3 protease region; the sequence is AEWSGCVEWHPELVNEGGEVSLRVRQDAMGNFHLTELEKE. An intramembrane region (helical) is located at residues 1455-1475; that stretch reads FWLIAGLAASAIHWSGIIGVM. Residues 1476–2160 are Cytoplasmic-facing; the sequence is GLWTLTKMLR…RMAERDAPEA (685 aa). The region spanning 1490-1669 is the Peptidase S7 domain; the sequence is SDLVFSGQGG…EAEKSRPNLP (180 aa). Residues His-1543, Asp-1567, and Ser-1627 each act as charge relay system; for serine protease NS3 activity in the active site. One can recognise a Helicase ATP-binding domain in the interval 1675–1831; it reads TGWTSKGQIT…ESNGAITSEE (157 aa). 1688 to 1695 is a binding site for ATP; sequence MHPGSGKT. Positions 1779–1782 match the DEAH box motif; that stretch reads DEAH. The Helicase C-terminal domain maps to 1841–2000; the sequence is DGFDWITEYE…TLRGPVATFY (160 aa). An N6-acetyllysine; by host modification is found at Lys-1883. Residues 2161–2181 form a helical membrane-spanning segment; it reads FLTMVEMMVLGLATLGVIWCF. The Lumenal segment spans residues 2182-2189; that stretch reads VVRTSISR. Positions 2190–2210 form an intramembrane region, helical; the sequence is MMLGTLVLLASLLLLWAGGVG. Residue Tyr-2211 is a topological domain, lumenal. Residues 2212 to 2232 traverse the membrane as a helical segment; sequence GNMAGVALIFYTLLTVLQPEA. The Cytoplasmic segment spans residues 2233–2244; sequence GKQRSSDDNKLA. The chain crosses the membrane as a helical span at residues 2245–2265; it reads YFLLTLCSLAGLVAANEMGFL. Residues 2266-2299 are Lumenal-facing; it reads EKTKADLSTVLWSEREEPRPWSEWTNVDIQPARS. The helical intramembrane region spans 2300–2320; sequence WGTYVLVVSLFTPYIIHQLQT. Residues 2321-2343 lie on the Lumenal side of the membrane; that stretch reads KIQQLVNSAVASGAQAMRDLGGG. An intramembrane region (helical) is located at residues 2344 to 2364; it reads APFFGVAGHVMTLGVVSLIGA. Topologically, residues 2365 to 2368 are lumenal; that stretch reads TPTS. A helical transmembrane segment spans residues 2369-2389; that stretch reads LMVGVGLAALHLAIVVSGLEA. Residues 2390–2432 are Cytoplasmic-facing; the sequence is ELTQRAHKVFFSAMVRNPMVDGDVINPFGEGEAKPALYERRMS. Residues 2433–2453 form a helical membrane-spanning segment; it reads LVLAIVLCLMSVVMNRTVASI. Topologically, residues 2454–2477 are lumenal; the sequence is TEASAVGLAAAGQLLRPEADTLWT. Residues 2478–2498 traverse the membrane as a helical segment; sequence MPVACGMSGVVRGSLWGFLPL. Residues 2499-3414 lie on the Cytoplasmic side of the membrane; sequence GHRLWLRASG…WELRLESSII (916 aa). Residues 2512–2776 enclose the mRNA cap 0-1 NS5-type MT domain; it reads GGSEGDTLGD…ELDLGVGTRC (265 aa). Ser-2567 serves as a coordination point for S-adenosyl-L-methionine. Ser-2567 is subject to Phosphoserine. The active-site For 2'-O-MTase activity is Lys-2572. Residues Gly-2597, Trp-2598, Thr-2615, Ile-2616, Asp-2642, and Val-2643 each contribute to the S-adenosyl-L-methionine site. Residue Asp-2657 is the For 2'-O-MTase activity of the active site. Residue Ile-2658 coordinates S-adenosyl-L-methionine. Residues Lys-2694 and Glu-2730 each act as for 2'-O-MTase activity in the active site. Residues 2730 to 2734 form an interaction with host SCRIB region; it reads EMYYS. Tyr-2732 serves as a coordination point for S-adenosyl-L-methionine. Zn(2+)-binding residues include Glu-2950, His-2954, Cys-2959, and Cys-2962. The RdRp catalytic domain occupies 3040–3189; sequence GLFYADDTAG…RPLDDRFGKA (150 aa). 3 residues coordinate Zn(2+): His-3224, Cys-3240, and Cys-3359.

The protein in the N-terminal section; belongs to the class I-like SAM-binding methyltransferase superfamily. mRNA cap 0-1 NS5-type methyltransferase family. Homodimer. Interacts (via N-terminus) with host EXOC1 (via C-terminus); this interaction results in EXOC1 degradation through the proteasome degradation pathway. In terms of assembly, forms heterodimers with envelope protein E in the endoplasmic reticulum and Golgi. As to quaternary structure, homodimer; in the endoplasmic reticulum and Golgi. Interacts with protein prM. Interacts with non-structural protein 1. Homodimer; Homohexamer when secreted. Interacts with envelope protein E. In terms of assembly, interacts (via N-terminus) with serine protease NS3. As to quaternary structure, forms a heterodimer with serine protease NS3. May form homooligomers. Forms a heterodimer with NS2B. Interacts with NS4B. Interacts with unphosphorylated RNA-directed RNA polymerase NS5; this interaction stimulates RNA-directed RNA polymerase NS5 guanylyltransferase activity. In terms of assembly, interacts with serine protease NS3. As to quaternary structure, homodimer. Interacts with host STAT2; this interaction inhibits the phosphorylation of the latter, and, when all viral proteins are present (polyprotein), targets STAT2 for degradation. Interacts with serine protease NS3. Interacts with host SCRIB; this interaction targets NS5 to the cell membrane periphery and nucleus, thereby allowing efficient host nuclear STAT1 inhibition. Specific enzymatic cleavages in vivo yield mature proteins. Cleavages in the lumen of endoplasmic reticulum are performed by host signal peptidase, whereas cleavages in the cytoplasmic side are performed by serine protease NS3. Signal cleavage at the 2K-4B site requires a prior NS3 protease-mediated cleavage at the 4A-2K site. In terms of processing, cleaved in post-Golgi vesicles by a host furin, releasing the mature small envelope protein M, and peptide pr. This cleavage is incomplete as up to 30% of viral particles still carry uncleaved prM. Post-translationally, N-glycosylated. N-glycosylated. The excreted form is glycosylated and this is required for efficient secretion of the protein from infected cells. In terms of processing, acetylated by host KAT5. Acetylation modulates NS3 RNA-binding and unwinding activities and plays an important positive role for viral replication. Post-translationally, phosphorylated on serines residues. This phosphorylation may trigger NS5 nuclear localization.

The protein localises to the virion. It localises to the host nucleus. Its subcellular location is the host cytoplasm. It is found in the host perinuclear region. The protein resides in the secreted. The protein localises to the virion membrane. It localises to the host endoplasmic reticulum membrane. It carries out the reaction Selective hydrolysis of -Xaa-Xaa-|-Yaa- bonds in which each of the Xaa can be either Arg or Lys and Yaa can be either Ser or Ala.. The catalysed reaction is RNA(n) + a ribonucleoside 5'-triphosphate = RNA(n+1) + diphosphate. The enzyme catalyses a ribonucleoside 5'-triphosphate + H2O = a ribonucleoside 5'-diphosphate + phosphate + H(+). It catalyses the reaction ATP + H2O = ADP + phosphate + H(+). It carries out the reaction a 5'-end (5'-triphosphoguanosine)-ribonucleoside in mRNA + S-adenosyl-L-methionine = a 5'-end (N(7)-methyl 5'-triphosphoguanosine)-ribonucleoside in mRNA + S-adenosyl-L-homocysteine. The catalysed reaction is a 5'-end (N(7)-methyl 5'-triphosphoguanosine)-ribonucleoside in mRNA + S-adenosyl-L-methionine = a 5'-end (N(7)-methyl 5'-triphosphoguanosine)-(2'-O-methyl-ribonucleoside) in mRNA + S-adenosyl-L-homocysteine + H(+). Its function is as follows. Plays a role in virus budding by binding to the cell membrane and gathering the viral RNA into a nucleocapsid that forms the core of a mature virus particle. During virus entry, may induce genome penetration into the host cytoplasm after hemifusion induced by the surface proteins. Can migrate to the cell nucleus where it modulates host functions. Inhibits RNA silencing by interfering with host Dicer. In terms of biological role, prevents premature fusion activity of envelope proteins in trans-Golgi by binding to envelope protein E at pH6.0. After virion release in extracellular space, gets dissociated from E dimers. Functionally, acts as a chaperone for envelope protein E during intracellular virion assembly by masking and inactivating envelope protein E fusion peptide. prM is the only viral peptide matured by host furin in the trans-Golgi network probably to avoid catastrophic activation of the viral fusion activity in acidic Golgi compartment prior to virion release. prM-E cleavage is inefficient, and many virions are only partially matured. These uncleaved prM would play a role in immune evasion. Its function is as follows. May play a role in virus budding. Exerts cytotoxic effects by activating a mitochondrial apoptotic pathway through M ectodomain. May display a viroporin activity. Binds to host cell surface receptor and mediates fusion between viral and cellular membranes. Envelope protein is synthesized in the endoplasmic reticulum in the form of heterodimer with protein prM. They play a role in virion budding in the ER, and the newly formed immature particle is covered with 60 spikes composed of heterodimer between precursor prM and envelope protein E. The virion is transported to the Golgi apparatus where the low pH causes dissociation of PrM-E heterodimers and formation of E homodimers. prM-E cleavage is inefficient, and many virions are only partially matured. These uncleaved prM would play a role in immune evasion. In terms of biological role, involved in immune evasion, pathogenesis and viral replication. Once cleaved off the polyprotein, is targeted to three destinations: the viral replication cycle, the plasma membrane and the extracellular compartment. Essential for viral replication. Required for formation of the replication complex and recruitment of other non-structural proteins to the ER-derived membrane structures. Excreted as a hexameric lipoparticle that plays a role against host immune response. Antagonizing the complement function. Binds to the host macrophages and dendritic cells. Inhibits signal transduction originating from Toll-like receptor 3 (TLR3). Functionally, component of the viral RNA replication complex that functions in virion assembly and antagonizes the host immune response. Its function is as follows. Required cofactor for the serine protease function of NS3. May have membrane-destabilizing activity and form viroporins. Displays three enzymatic activities: serine protease, NTPase and RNA helicase. NS3 serine protease, in association with NS2B, performs its autocleavage and cleaves the polyprotein at dibasic sites in the cytoplasm: C-prM, NS2A-NS2B, NS2B-NS3, NS3-NS4A, NS4A-2K and NS4B-NS5. NS3 RNA helicase binds RNA and unwinds dsRNA in the 3' to 5' direction. In terms of biological role, regulates the ATPase activity of the NS3 helicase activity. NS4A allows NS3 helicase to conserve energy during unwinding. Functionally, functions as a signal peptide for NS4B and is required for the interferon antagonism activity of the latter. Its function is as follows. Induces the formation of ER-derived membrane vesicles where the viral replication takes place. Inhibits interferon (IFN)-induced host STAT1 phosphorylation and nuclear translocation, thereby preventing the establishment of cellular antiviral state by blocking the IFN-alpha/beta pathway. Inhibits STAT2 translocation in the nucleus after IFN-alpha treatment. Replicates the viral (+) and (-) genome, and performs the capping of genomes in the cytoplasm. NS5 methylates viral RNA cap at guanine N-7 and ribose 2'-O positions. Besides its role in genome replication, also prevents the establishment of cellular antiviral state by blocking the interferon-alpha/beta (IFN-alpha/beta) signaling pathway. Inhibits host TYK2 and STAT2 phosphorylation, thereby preventing activation of JAK-STAT signaling pathway. The polypeptide is Genome polyprotein (Tick-borne encephalitis virus (strain Hypr) (TBEV)).